Consider the following 265-residue polypeptide: 3-methyl-2-oxobutanoate hydroxymethyltransferase (265 aa).

Residues D45 and D84 each contribute to the Mg(2+) site. Residues 45 to 46 (DS), D84, and K112 contribute to the 3-methyl-2-oxobutanoate site. E114 is a Mg(2+) binding site. The active-site Proton acceptor is the E181.

This sequence belongs to the PanB family. Homodecamer; pentamer of dimers. Requires Mg(2+) as cofactor.

It localises to the cytoplasm. It catalyses the reaction 3-methyl-2-oxobutanoate + (6R)-5,10-methylene-5,6,7,8-tetrahydrofolate + H2O = 2-dehydropantoate + (6S)-5,6,7,8-tetrahydrofolate. It functions in the pathway cofactor biosynthesis; (R)-pantothenate biosynthesis; (R)-pantoate from 3-methyl-2-oxobutanoate: step 1/2. Functionally, catalyzes the reversible reaction in which hydroxymethyl group from 5,10-methylenetetrahydrofolate is transferred onto alpha-ketoisovalerate to form ketopantoate. In Yersinia pestis bv. Antiqua (strain Antiqua), this protein is 3-methyl-2-oxobutanoate hydroxymethyltransferase.